The following is a 324-amino-acid chain: Glyoxylate/hydroxypyruvate reductase B (324 aa).

Catalysis depends on residues R237 and E266. The Proton donor role is filled by H285.

The protein belongs to the D-isomer specific 2-hydroxyacid dehydrogenase family. GhrB subfamily. In terms of assembly, homodimer.

Its subcellular location is the cytoplasm. It carries out the reaction glycolate + NADP(+) = glyoxylate + NADPH + H(+). The catalysed reaction is (R)-glycerate + NAD(+) = 3-hydroxypyruvate + NADH + H(+). It catalyses the reaction (R)-glycerate + NADP(+) = 3-hydroxypyruvate + NADPH + H(+). In terms of biological role, catalyzes the NADPH-dependent reduction of glyoxylate and hydroxypyruvate into glycolate and glycerate, respectively. The polypeptide is Glyoxylate/hydroxypyruvate reductase B (Enterobacter sp. (strain 638)).